The chain runs to 179 residues: NADH dehydrogenase [ubiquinone] 1 beta subcomplex subunit 9 (179 aa).

N-acetylalanine is present on A2. At S85 the chain carries Phosphoserine. Positions 136–162 (EVKQLQEETPPGGPLTEALPPARKEGD) are disordered.

Belongs to the complex I LYR family. In terms of assembly, mammalian complex I is composed of 45 different subunits.

It localises to the mitochondrion inner membrane. Accessory subunit of the mitochondrial membrane respiratory chain NADH dehydrogenase (Complex I), that is believed to be not involved in catalysis. Complex I functions in the transfer of electrons from NADH to the respiratory chain. The immediate electron acceptor for the enzyme is believed to be ubiquinone. The protein is NADH dehydrogenase [ubiquinone] 1 beta subcomplex subunit 9 (NDUFB9) of Pan troglodytes (Chimpanzee).